We begin with the raw amino-acid sequence, 330 residues long: MKKSFILQQQEISFTKNTFTEKLAEHLGLVEVQGPILSQVGNGIQDNLSGTEKAVQVNVKMITDAAFEVVHSLAKWKRHTLARFGFAEGEGLFVHMKALRPDEDSLDQTHSVYVDQWDWEKVIPEGRRNLDYLKETVREIYAAILETEAAVDKKYGLKSFLPKEITFIHSEDLVKDYPGMTDKERENELCKKYGAVFLIGIGGVLPDGKPHDGRAPDYDDWTTTSEGEYKGLNGDILVWNPILNRAFEVSSMGIRVDETALRKQLSITGDEDRLKFDWHQDLINGRMPLSIGGGIGQSRLAMLLLQKRHIGEVQSSVWPKAVMEQYENIL.

It belongs to the class-II aminoacyl-tRNA synthetase family. AsnA subfamily.

It is found in the cytoplasm. The catalysed reaction is L-aspartate + NH4(+) + ATP = L-asparagine + AMP + diphosphate + H(+). Its pathway is amino-acid biosynthesis; L-asparagine biosynthesis; L-asparagine from L-aspartate (ammonia route): step 1/1. The polypeptide is Aspartate--ammonia ligase (Mannheimia succiniciproducens (strain KCTC 0769BP / MBEL55E)).